A 225-amino-acid chain; its full sequence is Uracil-DNA glycosylase (225 aa).

Catalysis depends on Asp65, which acts as the Proton acceptor.

It belongs to the uracil-DNA glycosylase (UDG) superfamily. UNG family.

The protein resides in the cytoplasm. The enzyme catalyses Hydrolyzes single-stranded DNA or mismatched double-stranded DNA and polynucleotides, releasing free uracil.. In terms of biological role, excises uracil residues from the DNA which can arise as a result of misincorporation of dUMP residues by DNA polymerase or due to deamination of cytosine. The polypeptide is Uracil-DNA glycosylase (Bacillus cereus (strain B4264)).